The following is a 104-amino-acid chain: Secreted RxLR effector protein 54 (104 aa).

The first 19 residues, 1–19, serve as a signal peptide directing secretion; it reads MIFTLLGLALVATKSACIA. The RxLR signature appears at 52–55; that stretch reads RSLR. A glycan (N-linked (GlcNAc...) asparagine) is linked at Asn-64.

It belongs to the RxLR effector family.

Its subcellular location is the secreted. The protein resides in the host chloroplast envelope. It is found in the host mitochondrion. It localises to the host nucleus. The protein localises to the host cytoplasm. Functionally, secreted effector that completely suppresses the host cell death induced by cell death-inducing proteins. This is Secreted RxLR effector protein 54 from Plasmopara viticola (Downy mildew of grapevine).